The chain runs to 277 residues: Large ribosomal subunit protein uL2 (277 aa).

Residues 223-277 are disordered; the sequence is VTMNPVDHPHGGGEGRTSGGRHPVTPWGKPTKGMKTRSNKATDKFIVTSRHKRKK.

It belongs to the universal ribosomal protein uL2 family. As to quaternary structure, part of the 50S ribosomal subunit. Forms a bridge to the 30S subunit in the 70S ribosome.

In terms of biological role, one of the primary rRNA binding proteins. Required for association of the 30S and 50S subunits to form the 70S ribosome, for tRNA binding and peptide bond formation. It has been suggested to have peptidyltransferase activity; this is somewhat controversial. Makes several contacts with the 16S rRNA in the 70S ribosome. This chain is Large ribosomal subunit protein uL2, found in Azorhizobium caulinodans (strain ATCC 43989 / DSM 5975 / JCM 20966 / LMG 6465 / NBRC 14845 / NCIMB 13405 / ORS 571).